Reading from the N-terminus, the 57-residue chain is Large ribosomal subunit protein bL32 (57 aa).

Over residues 1 to 19 (MAVPKRRMSRANTRSRRAQ) the composition is skewed to basic residues. Positions 1–20 (MAVPKRRMSRANTRSRRAQW) are disordered.

This sequence belongs to the bacterial ribosomal protein bL32 family.

In Mycobacterium avium (strain 104), this protein is Large ribosomal subunit protein bL32.